The sequence spans 209 residues: MMENYITSFQLRFCPAAYLHLEQLPSLWRSILPYLPQWRDSAHLNAALLDEFSLDTDYEEPHGLGALPLQPQSQLELLLCRLGLVLHGEAIRRCVLASPLQQLLTLVNQETLRQIIVQHELLIGPWPTNWQRPLPTEIESRTMIQSGLAFWLAAMEPQPQAWCKRLSLRLPLATPSEPWLVAESQRPLAQTLCHKLVKQVMPTCSHLFK.

Its function is as follows. Belongs to an operon involved in the translocation of Yop proteins across the bacterial membranes or in the specific control of this function. This chain is Yop proteins translocation protein K (yscK), found in Yersinia enterocolitica.